We begin with the raw amino-acid sequence, 160 residues long: SKP1-like protein 1A (160 aa).

The segment at 102–160 (ILAANYLNIKNLLDLTCQTVADMIKGKTPEEIRTTFNIKNDFTPEEEEEVRRENQWAFE) is interaction with the F-box domain of F-box proteins.

The protein belongs to the SKP1 family. Part of a SCF E3 ubiquitin ligase complex composed of SKP1, CUL1, RBX1 (RBX1A or RBX1B) and F-box proteins. Interacts with SKIP1, SKIP2, SKIP3, SKIP4, SKIP6, FIB1/SKIP7, SKIP8, PP2A11/SKIP10, SKIP11, PP2B11/SKIP12, PP2A14/SKIP13, SKIP14, SKIP15, SKIP16, SKIP19/FBL20, SKIP20, PP2B1/SKIP21, SKIP22, SKIP23, SKIP24, SKIP25, TULP10/SKIP26, SKIP27, SKIP28/MEE11, AFR/SKIP29, SKIP30, SKIP31, SKIP32/FBP7, SKIP33, SKIP35, ADO1/ZTL, ADO2/LKP2, ADO3/FKF1, AFR, COI1, DOR, EBF1, EBF2, EID1, ORE9, PP2A13/SKIP9, TIR1, UFO, SKP2A, CPR1/CPR30, FBL17, NUP58, At1g55000, At1g67340, At1g78100, At3g04660, At3g61590, At4g38940 and At5g49610. The SKP1A subunit of the SCF E3 ubiquitin ligase complex can interact directly with KIN10, KIN11 and the proteasome subunit PAD1. This interaction can be disrupted by PRL1. In case of polerovirus infection, part of a SCF P0 complex composed of the viral silencing suppressor P0, SKP1 and CUL1. Interacts with turnip yellows virus P0. Interacts with VBF and Agrobacterium virF. Binds to KIB1. In terms of tissue distribution, accumulates only in meristematic cells. Expressed in inflorescence, shoot and root apical meristems, as well as in developing organs such as gametocytes and seeds. Also detected in cortical layer and epidermis of roots, leaves, pith and vascular bundle of young stem, young floral buds and organ primordia, pollen and through the valve of siliques. Not detectable in mature root tissues.

It localises to the nucleus. The protein localises to the cytoplasm. It is found in the cytoskeleton. The protein resides in the spindle. Its subcellular location is the phragmoplast. It participates in protein modification; protein ubiquitination. Functionally, involved in ubiquitination and subsequent proteasomal degradation of target proteins. Together with CUL1, RBX1 and a F-box protein, it forms a SCF E3 ubiquitin ligase complex. The functional specificity of this complex depends on the type of F-box protein. In the SCF complex, it serves as an adapter that links the F-box protein to CUL1. SCF(UFO) is required for vegetative and floral organ development as well as for male gametogenesis. SCF(TIR1) is involved in auxin signaling pathway. SCF(COI1) regulates responses to jasmonates. SCF(EID1) and SCF(AFR) are implicated in phytochrome A light signaling. SCF(ADO1), SCF(ADO2), SCF(ADO3) are related to the circadian clock. SCF(ORE9) seems to be involved in senescence. SCF(EBF1/EBF2) may regulate ethylene signaling. Plays a role during embryogenesis and early postembryonic development, especially during cell elongation and division. Contributes to the correct chromosome segregation during tetrad formation. This is SKP1-like protein 1A from Arabidopsis thaliana (Mouse-ear cress).